Consider the following 344-residue polypeptide: Protein POLAR LOCALIZATION DURING ASYMMETRIC DIVISION AND REDISTRIBUTION (344 aa).

At T19 the chain carries Phosphothreonine; by ASK7. The residue at position 79 (S79) is a Phosphoserine; by ASK7. 2 positions are modified to phosphothreonine; by ASK7: T84 and T86. A phosphoserine; by ASK7 mark is found at S91 and S94. A phosphothreonine; by ASK7 mark is found at T193, T217, and T233. S235 carries the post-translational modification Phosphoserine; by ASK7. Positions 262-297 (LETRQQEELVKLETALNRVERRLQEKETEVSWWKDA) form a coiled coil. Phosphoserine; by ASK7 occurs at positions 308, 309, 320, 321, and 336.

In terms of assembly, component of a complex made of POLAR, BASL, ASK7/BIN2 and ASK3/SK12. Interacts with BASL, ASK7/BIN2 and ASK3/SK12. Post-translationally, phosphorylation by ASK7/BIN2 is increases turnover. In terms of tissue distribution, expressed in stomatal lineage cells with asymmetric division potential.

Its subcellular location is the cytoplasm. The protein localises to the cell cortex. Functionally, regulates asymmetric cell division (ACD), especially in stomatal-lineage cells. Acts as a stomatal lineage scaffold which regulates subcellular localization and transient polarization of kinases (e.g. ASK7/BIN2 and ASK3/SK12) involved in ACD in a BASL-dependent manner. Promotes the differentiation of both pavement cells and stomata. The protein is Protein POLAR LOCALIZATION DURING ASYMMETRIC DIVISION AND REDISTRIBUTION of Arabidopsis thaliana (Mouse-ear cress).